We begin with the raw amino-acid sequence, 407 residues long: Chorismate synthase (407 aa).

Residues R40 and R46 each contribute to the NADP(+) site. FMN contacts are provided by residues 138-140 (RAS) and 259-260 (QA). A compositionally biased stretch (basic and acidic residues) spans 275 to 284 (RRGSRAHDEM). The segment at 275–308 (RRGSRAHDEMYPGTDGVVRSTNRAGGLEGGMTNG) is disordered. FMN contacts are provided by residues G303, 318-322 (KPIST), and R344.

Belongs to the chorismate synthase family. In terms of assembly, homotetramer. FMNH2 is required as a cofactor.

The catalysed reaction is 5-O-(1-carboxyvinyl)-3-phosphoshikimate = chorismate + phosphate. The protein operates within metabolic intermediate biosynthesis; chorismate biosynthesis; chorismate from D-erythrose 4-phosphate and phosphoenolpyruvate: step 7/7. In terms of biological role, catalyzes the anti-1,4-elimination of the C-3 phosphate and the C-6 proR hydrogen from 5-enolpyruvylshikimate-3-phosphate (EPSP) to yield chorismate, which is the branch point compound that serves as the starting substrate for the three terminal pathways of aromatic amino acid biosynthesis. This reaction introduces a second double bond into the aromatic ring system. This Mycobacterium ulcerans (strain Agy99) protein is Chorismate synthase.